A 383-amino-acid polypeptide reads, in one-letter code: Chitinase-3-like protein 1 (383 aa).

Residues 1 to 21 (MGLRASGTGFVVLVLLQSCAA) form the signal peptide. One can recognise a GH18 domain in the interval 22–383 (YKLICYYTSW…SAVKDVLAEV (362 aa)). A disulfide bond links cysteine 26 and cysteine 51. Asparagine 60 carries an N-linked (GlcNAc...) asparagine glycan. Chitin is bound by residues 70–71 (EW), 97–100 (GGWN), tyrosine 141, 204–207 (LTYD), and arginine 263. Cysteines 300 and 364 form a disulfide. The tract at residues 324 to 338 (QWVAYDDQESVKNKA) is important for AKT1 activation and IL8 production. Tryptophan 352 is a binding site for chitin. Asparagine 367 carries an N-linked (GlcNAc...) asparagine glycan.

This sequence belongs to the glycosyl hydrolase 18 family. Monomer.

It is found in the secreted. The protein resides in the extracellular space. The protein localises to the cytoplasm. Its subcellular location is the perinuclear region. It localises to the endoplasmic reticulum. Its function is as follows. Carbohydrate-binding lectin with a preference for chitin. Has no chitinase activity. May play a role in tissue remodeling and in the capacity of cells to respond to and cope with changes in their environment. Plays a role in T-helper cell type 2 (Th2) inflammatory response and IL-13-induced inflammation, regulating allergen sensitization, inflammatory cell apoptosis, dendritic cell accumulation and M2 macrophage differentiation. Facilitates invasion of pathogenic enteric bacteria into colonic mucosa and lymphoid organs. Mediates activation of AKT1 signaling pathway and subsequent IL8 production in colonic epithelial cells. Regulates antibacterial responses in lung by contributing to macrophage bacterial killing, controlling bacterial dissemination and augmenting host tolerance. Also regulates hyperoxia-induced injury, inflammation and epithelial apoptosis in lung. The protein is Chitinase-3-like protein 1 (CHI3L1) of Capra hircus (Goat).